Reading from the N-terminus, the 98-residue chain is NADH-ubiquinone oxidoreductase chain 4L (98 aa).

Transmembrane regions (helical) follow at residues M1–V21, S29–L49, and I61–V81.

The protein belongs to the complex I subunit 4L family. As to quaternary structure, core subunit of respiratory chain NADH dehydrogenase (Complex I) which is composed of 45 different subunits.

The protein resides in the mitochondrion inner membrane. It carries out the reaction a ubiquinone + NADH + 5 H(+)(in) = a ubiquinol + NAD(+) + 4 H(+)(out). In terms of biological role, core subunit of the mitochondrial membrane respiratory chain NADH dehydrogenase (Complex I) which catalyzes electron transfer from NADH through the respiratory chain, using ubiquinone as an electron acceptor. Part of the enzyme membrane arm which is embedded in the lipid bilayer and involved in proton translocation. This Ursus arctos (Brown bear) protein is NADH-ubiquinone oxidoreductase chain 4L (MT-ND4L).